Here is a 331-residue protein sequence, read N- to C-terminus: Probable tRNA pseudouridine synthase B (331 aa).

D66 acts as the Nucleophile in catalysis. The PUA domain maps to 233 to 307; sequence INKIIVKDSA…NEEDNREKYK (75 aa).

It belongs to the pseudouridine synthase TruB family. Type 2 subfamily.

It carries out the reaction uridine(55) in tRNA = pseudouridine(55) in tRNA. Could be responsible for synthesis of pseudouridine from uracil-55 in the psi GC loop of transfer RNAs. This chain is Probable tRNA pseudouridine synthase B, found in Methanococcus aeolicus (strain ATCC BAA-1280 / DSM 17508 / OCM 812 / Nankai-3).